We begin with the raw amino-acid sequence, 388 residues long: Chorismate synthase (388 aa).

Residues R39 and R45 each coordinate NADP(+). Residues 130–132 (RSS), 251–252 (NA), G296, 311–315 (KPIPT), and R337 contribute to the FMN site.

This sequence belongs to the chorismate synthase family. As to quaternary structure, homotetramer. The cofactor is FMNH2.

The catalysed reaction is 5-O-(1-carboxyvinyl)-3-phosphoshikimate = chorismate + phosphate. It participates in metabolic intermediate biosynthesis; chorismate biosynthesis; chorismate from D-erythrose 4-phosphate and phosphoenolpyruvate: step 7/7. Functionally, catalyzes the anti-1,4-elimination of the C-3 phosphate and the C-6 proR hydrogen from 5-enolpyruvylshikimate-3-phosphate (EPSP) to yield chorismate, which is the branch point compound that serves as the starting substrate for the three terminal pathways of aromatic amino acid biosynthesis. This reaction introduces a second double bond into the aromatic ring system. This is Chorismate synthase from Streptococcus pyogenes serotype M5 (strain Manfredo).